Here is a 305-residue protein sequence, read N- to C-terminus: Tyrosine recombinase XerC (305 aa).

The region spanning 4 to 95 (TSIQELINKW…AVKNFYKFLE (92 aa)) is the Core-binding (CB) domain. The region spanning 116–298 (LLPKSLSEDD…SIKHLVSVYT (183 aa)) is the Tyr recombinase domain. Active-site residues include arginine 159, lysine 182, histidine 250, arginine 253, and histidine 276. The O-(3'-phospho-DNA)-tyrosine intermediate role is filled by tyrosine 285.

The protein belongs to the 'phage' integrase family. XerC subfamily. Forms a cyclic heterotetrameric complex composed of two molecules of XerC and two molecules of XerD.

Its subcellular location is the cytoplasm. In terms of biological role, site-specific tyrosine recombinase, which acts by catalyzing the cutting and rejoining of the recombining DNA molecules. The XerC-XerD complex is essential to convert dimers of the bacterial chromosome into monomers to permit their segregation at cell division. It also contributes to the segregational stability of plasmids. The sequence is that of Tyrosine recombinase XerC from Rickettsia canadensis (strain McKiel).